The sequence spans 120 residues: ATP-dependent Clp protease adapter protein ClpS (120 aa).

The protein belongs to the ClpS family. In terms of assembly, binds to the N-terminal domain of the chaperone ClpA.

Its function is as follows. Involved in the modulation of the specificity of the ClpAP-mediated ATP-dependent protein degradation. The polypeptide is ATP-dependent Clp protease adapter protein ClpS (Pseudomonas syringae pv. syringae (strain B728a)).